A 572-amino-acid polypeptide reads, in one-letter code: Dihydroxy-acid dehydratase (572 aa).

A Mg(2+)-binding site is contributed by D78. Residue C119 coordinates [2Fe-2S] cluster. Mg(2+) contacts are provided by D120 and K121. Residue K121 is modified to N6-carboxylysine. C192 lines the [2Fe-2S] cluster pocket. Mg(2+) is bound at residue E459. S485 functions as the Proton acceptor in the catalytic mechanism.

The protein belongs to the IlvD/Edd family. As to quaternary structure, homodimer. The cofactor is [2Fe-2S] cluster. It depends on Mg(2+) as a cofactor.

The enzyme catalyses (2R)-2,3-dihydroxy-3-methylbutanoate = 3-methyl-2-oxobutanoate + H2O. The catalysed reaction is (2R,3R)-2,3-dihydroxy-3-methylpentanoate = (S)-3-methyl-2-oxopentanoate + H2O. It participates in amino-acid biosynthesis; L-isoleucine biosynthesis; L-isoleucine from 2-oxobutanoate: step 3/4. Its pathway is amino-acid biosynthesis; L-valine biosynthesis; L-valine from pyruvate: step 3/4. In terms of biological role, functions in the biosynthesis of branched-chain amino acids. Catalyzes the dehydration of (2R,3R)-2,3-dihydroxy-3-methylpentanoate (2,3-dihydroxy-3-methylvalerate) into 2-oxo-3-methylpentanoate (2-oxo-3-methylvalerate) and of (2R)-2,3-dihydroxy-3-methylbutanoate (2,3-dihydroxyisovalerate) into 2-oxo-3-methylbutanoate (2-oxoisovalerate), the penultimate precursor to L-isoleucine and L-valine, respectively. The sequence is that of Dihydroxy-acid dehydratase from Helicobacter hepaticus (strain ATCC 51449 / 3B1).